A 147-amino-acid chain; its full sequence is Shadow of prion protein (147 aa).

The signal sequence occupies residues 1–24; sequence MNWTAATCWALLLAAAFLCDSCSA. Over residues 26–43 the composition is skewed to gly residues; sequence GGRGGARGSARGVRGGAR. Residues 26–45 are disordered; sequence GGRGGARGSARGVRGGARGA. Asparagine 107 carries N-linked (GlcNAc...) asparagine glycosylation. Glycine 122 carries GPI-anchor amidated glycine lipidation. Residues 123–147 constitute a propeptide, removed in mature form; it reads SGSVHSPRICLLLGGTLGALELLRP.

Belongs to the SPRN family. Post-translationally, N-glycosylated. Mainly expressed in brain (at protein level). In brain, it is highly expressed in the hippocampus and cerebellum and is also expressed at lower level in other areas of the brain including the cerebral cortex, the thalamus and the medulla. In hippocampus and cerebellum it is highly expressed in the cell bodies of pyramidal cells and Purkinje cells, respectively.

The protein resides in the cell membrane. Its function is as follows. Prion-like protein that has PrP(C)-like neuroprotective activity. May act as a modulator for the biological actions of normal and abnormal PrP. The protein is Shadow of prion protein (Sprn) of Mus musculus (Mouse).